A 285-amino-acid polypeptide reads, in one-letter code: Probable enoyl-CoA hydratase echA12 (285 aa).

Belongs to the enoyl-CoA hydratase/isomerase family.

The enzyme catalyses a (3S)-3-hydroxyacyl-CoA = a (2E)-enoyl-CoA + H2O. It catalyses the reaction a 4-saturated-(3S)-3-hydroxyacyl-CoA = a (3E)-enoyl-CoA + H2O. Could possibly oxidize fatty acids using specific components. The chain is Probable enoyl-CoA hydratase echA12 (echA12) from Mycobacterium tuberculosis (strain CDC 1551 / Oshkosh).